Here is a 394-residue protein sequence, read N- to C-terminus: RNA binding protein fox-1 homolog 2 (394 aa).

Disordered regions lie at residues 1–70 (MGRL…DYAG) and 83–135 (TQAH…HVSN). Polar residues-rich tracts occupy residues 24–36 (RDSQ…TTTP) and 83–103 (TQAH…SLTT). A compositionally biased stretch (low complexity) spans 105–125 (GGAQTDGQQSQTQSSENSESK). The 77-residue stretch at 129–205 (KRLHVSNIPF…RKIEVNNATA (77 aa)) folds into the RRM domain. Omega-N-methylarginine is present on Arg-285. Asymmetric dimethylarginine is present on residues Arg-301 and Arg-333. Residues Arg-385 and Arg-390 each carry the asymmetric dimethylarginine; alternate modification. 2 positions are modified to omega-N-methylarginine; alternate: Arg-385 and Arg-390.

Interacts with ER-alpha N-terminal activation domain. Interacts with RBPMS; the interaction allows cooperative assembly of stable cell-specific alternative splicing regulatory complexes.

Its subcellular location is the nucleus. The protein localises to the cytoplasm. RNA-binding protein that regulates alternative splicing events by binding to 5'-UGCAUGU-3' elements. Prevents binding of U2AF2 to the 3'-splice site. Regulates alternative splicing of tissue-specific exons and of differentially spliced exons during erythropoiesis. Seems to act as a coregulatory factor of ER-alpha. Together with RNA binding proteins RBPMS and MBNL1/2, activates vascular smooth muscle cells alternative splicing events. The sequence is that of RNA binding protein fox-1 homolog 2 (RBFOX2) from Bos taurus (Bovine).